The sequence spans 286 residues: ATP synthase gamma chain (286 aa).

Belongs to the ATPase gamma chain family. In terms of assembly, F-type ATPases have 2 components, CF(1) - the catalytic core - and CF(0) - the membrane proton channel. CF(1) has five subunits: alpha(3), beta(3), gamma(1), delta(1), epsilon(1). CF(0) has three main subunits: a, b and c.

The protein localises to the cell inner membrane. In terms of biological role, produces ATP from ADP in the presence of a proton gradient across the membrane. The gamma chain is believed to be important in regulating ATPase activity and the flow of protons through the CF(0) complex. The protein is ATP synthase gamma chain of Shewanella piezotolerans (strain WP3 / JCM 13877).